Here is a 535-residue protein sequence, read N- to C-terminus: Dimethylaniline monooxygenase [N-oxide-forming] 2 (535 aa).

Ala-2 is modified (N-acetylalanine). FAD contacts are provided by residues 9–13, Glu-32, 40–41, and 61–62; these read GAGVS, LW, and NT. NADP(+)-binding positions include 60–61 and 195–198; these read TN and SASD. Lys-492 participates in a covalent cross-link: Glycyl lysine isopeptide (Lys-Gly) (interchain with G-Cter in SUMO). The chain crosses the membrane as a helical span at residues 510–530; sequence FPVSFLLKFLGLFALVLAFLF.

It belongs to the FMO family. Requires FAD as cofactor. Mg(2+) is required as a cofactor. As to expression, lung.

Its subcellular location is the microsome membrane. The protein localises to the endoplasmic reticulum membrane. It carries out the reaction N,N-dimethylaniline + NADPH + O2 + H(+) = N,N-dimethylaniline N-oxide + NADP(+) + H2O. In terms of biological role, catalyzes the oxidative metabolism of numerous xenobiotics, including mainly therapeutic drugs and insecticides that contain a soft nucleophile, most commonly nitrogen and sulfur and participates to their bioactivation. Most drug substrates are tertiary amines such as prochlorperazine and trifluoperazine which are N-oxygenated to form the N-oxide, or sulfides such as thiourea and ethionamide, which are S-oxygenated to the sulfoxide. Others include primary alkylamines such as N-dodecylamine and octan-1-amine that are sequentially monooxygenated to oximes through intermediate hydroxylamines and both steps are NADPH- and oxygen-dependent. Also metabolized N-Deacetyl ketoconazole (DAK) to N-hydroxy-DAK and appears to further metabolizes N-hydroxy-DAK to two others metabolites. Also catalyzes S-oxygenation of the thioether-containing organophosphate insecticides, phorate and disulfoton. The protein is Dimethylaniline monooxygenase [N-oxide-forming] 2 of Oryctolagus cuniculus (Rabbit).